Reading from the N-terminus, the 252-residue chain is 3-dehydroquinate dehydratase (252 aa).

Residues S21, 46-48, and R82 each bind 3-dehydroquinate; that span reads EWR. H143 (proton donor/acceptor) is an active-site residue. The active-site Schiff-base intermediate with substrate is K170. 3-dehydroquinate is bound by residues R213, S232, and Q236.

It belongs to the type-I 3-dehydroquinase family. Homodimer.

It carries out the reaction 3-dehydroquinate = 3-dehydroshikimate + H2O. Its pathway is metabolic intermediate biosynthesis; chorismate biosynthesis; chorismate from D-erythrose 4-phosphate and phosphoenolpyruvate: step 3/7. Its function is as follows. Involved in the third step of the chorismate pathway, which leads to the biosynthesis of aromatic amino acids. Catalyzes the cis-dehydration of 3-dehydroquinate (DHQ) and introduces the first double bond of the aromatic ring to yield 3-dehydroshikimate. This is 3-dehydroquinate dehydratase from Escherichia coli O6:K15:H31 (strain 536 / UPEC).